Here is a 217-residue protein sequence, read N- to C-terminus: Flagellin B1 (217 aa).

Positions 1 to 12 (MKVFEFLKGKRG) are excised as a propeptide.

Belongs to the archaeal flagellin family.

Its subcellular location is the archaeal flagellum. Flagellin is the subunit protein which polymerizes to form the filaments of archaeal flagella. The polypeptide is Flagellin B1 (flaB1) (Methanocaldococcus jannaschii (strain ATCC 43067 / DSM 2661 / JAL-1 / JCM 10045 / NBRC 100440) (Methanococcus jannaschii)).